Consider the following 276-residue polypeptide: Large ribosomal subunit protein uL2 (276 aa).

Residues 226–276 (MNSVDHPHGGGEGKTSGGRHPVSPWGTPTKGYKTRSNKRTDKLILRHRNKG) form a disordered region.

The protein belongs to the universal ribosomal protein uL2 family. As to quaternary structure, part of the 50S ribosomal subunit. Forms a bridge to the 30S subunit in the 70S ribosome.

Its function is as follows. One of the primary rRNA binding proteins. Required for association of the 30S and 50S subunits to form the 70S ribosome, for tRNA binding and peptide bond formation. It has been suggested to have peptidyltransferase activity; this is somewhat controversial. Makes several contacts with the 16S rRNA in the 70S ribosome. This Vesicomyosocius okutanii subsp. Calyptogena okutanii (strain HA) protein is Large ribosomal subunit protein uL2.